The following is a 256-amino-acid chain: Ubiquinone/menaquinone biosynthesis C-methyltransferase UbiE (256 aa).

A compositionally biased stretch (basic and acidic residues) spans 1 to 12; it reads MTDPRKGDHAEP. Residues 1 to 21 are disordered; that stretch reads MTDPRKGDHAEPTTHFGYQDV. Residues T79, D100, and 128-129 contribute to the S-adenosyl-L-methionine site; that span reads DA.

The protein belongs to the class I-like SAM-binding methyltransferase superfamily. MenG/UbiE family.

It catalyses the reaction a 2-demethylmenaquinol + S-adenosyl-L-methionine = a menaquinol + S-adenosyl-L-homocysteine + H(+). The catalysed reaction is a 2-methoxy-6-(all-trans-polyprenyl)benzene-1,4-diol + S-adenosyl-L-methionine = a 5-methoxy-2-methyl-3-(all-trans-polyprenyl)benzene-1,4-diol + S-adenosyl-L-homocysteine + H(+). It functions in the pathway quinol/quinone metabolism; menaquinone biosynthesis; menaquinol from 1,4-dihydroxy-2-naphthoate: step 2/2. The protein operates within cofactor biosynthesis; ubiquinone biosynthesis. In terms of biological role, methyltransferase required for the conversion of demethylmenaquinol (DMKH2) to menaquinol (MKH2) and the conversion of 2-polyprenyl-6-methoxy-1,4-benzoquinol (DDMQH2) to 2-polyprenyl-3-methyl-6-methoxy-1,4-benzoquinol (DMQH2). The protein is Ubiquinone/menaquinone biosynthesis C-methyltransferase UbiE of Pseudomonas entomophila (strain L48).